The sequence spans 1129 residues: ATP-dependent DNA helicase mph1 (1129 aa).

Disordered stretches follow at residues 1-101 (MTGS…FEDA), 124-222 (TQLT…QNEG), and 236-306 (DAFD…TQHK). The segment covering 45-63 (DGTASDVRRRPSENRESQR) has biased composition (basic and acidic residues). Polar residues-rich tracts occupy residues 203 to 222 (NTKA…QNEG) and 242 to 285 (ISLS…QTDQ). The span at 297-306 (QKDEPPTQHK) shows a compositional bias: basic and acidic residues. Residues 331-499 (IAQKGLFHNL…AVIDGLDIAR (169 aa)) enclose the Helicase ATP-binding domain. ATP is bound at residue 344–351 (LPTGLGKT). The DEAH box signature appears at 447–450 (DEAH). The Helicase C-terminal domain maps to 674–843 (VLNHFMDAGE…GSRFTFHDDI (170 aa)). Disordered regions lie at residues 863-930 (IPDE…VEIP), 1018-1060 (RQGD…STED), and 1072-1129 (SVVK…DSDD). Basic residues-rich tracts occupy residues 877–889 (RRGR…PKKF) and 1028–1044 (SPRH…KPRY). Residues 1077–1086 (QKQQPFYSSQ) are compositionally biased toward polar residues.

Belongs to the DEAD box helicase family. DEAH subfamily. FANCM sub-subfamily. Interacts with the MHF histone-fold complex to form the FANCM-MHF complex.

Its subcellular location is the nucleus. It carries out the reaction ATP + H2O = ADP + phosphate + H(+). In terms of biological role, ATP-dependent DNA helicase involved in DNA damage repair by homologous recombination and in genome maintenance. Capable of unwinding D-loops. Plays a role in limiting crossover recombinants during mitotic DNA double-strand break (DSB) repair. Component of a FANCM-MHF complex which promotes gene conversion at blocked replication forks, probably by reversal of the stalled fork. This is ATP-dependent DNA helicase mph1 from Aspergillus oryzae (strain ATCC 42149 / RIB 40) (Yellow koji mold).